We begin with the raw amino-acid sequence, 620 residues long: Probable potassium transport system protein Kup (620 aa).

A run of 12 helical transmembrane segments spans residues 7–27, 44–64, 98–118, 135–155, 166–186, 201–221, 245–265, 278–298, 335–355, 361–381, 394–414, and 417–437; these read LALAALGVVFGDIGTSPLYAI, VFGVLSLLVWSLLLIVSLKYL, FFLIAIGLFGAALLYGDGMIT, PAFHDLIIPATVTVLVILFLF, LFGPVILLWFVVLGVLGLVEI, GIMFLLNNQLHGFMVLGAVFL, WAFLVLPALLLNYFGQGALLL, LVPSWGLIPMVILSTSATIIA, IYVPAANWSLMVATISLVIGF, LAAAYGVAVTATMLISTILFY, VLNVMIVVFLLVDLAFFGASA, and LFHGAWFPLVIAAVMFTVMMT.

It belongs to the HAK/KUP transporter (TC 2.A.72) family.

Its subcellular location is the cell inner membrane. The enzyme catalyses K(+)(in) + H(+)(in) = K(+)(out) + H(+)(out). Its function is as follows. Transport of potassium into the cell. Likely operates as a K(+):H(+) symporter. In Chlorobium chlorochromatii (strain CaD3), this protein is Probable potassium transport system protein Kup.